Here is a 293-residue protein sequence, read N- to C-terminus: Ribonuclease HII (293 aa).

The RNase H type-2 domain occupies 81 to 271; that stretch reads THIAGVDEAG…VREALGLPTG (191 aa). Residues Asp-87, Glu-88, and Asp-180 each coordinate a divalent metal cation. Residues 273-293 are disordered; that stretch reads PPSALQAELFPEAPSRTGVKS.

The protein belongs to the RNase HII family. Mn(2+) is required as a cofactor. The cofactor is Mg(2+).

The protein localises to the cytoplasm. It catalyses the reaction Endonucleolytic cleavage to 5'-phosphomonoester.. Functionally, endonuclease that specifically degrades the RNA of RNA-DNA hybrids. The protein is Ribonuclease HII of Myxococcus xanthus (strain DK1622).